Consider the following 449-residue polypeptide: Plasmepsin IV (449 aa).

Residues 1–37 are Cytoplasmic-facing; the sequence is MALTVKEEEFSNTLIKNASAFDRLKLGNLKNLKIQKK. The propeptide occupies 1-121; it reads MALTVKEEEF…SGYAQKGYLG (121 aa). The helical; Signal-anchor for type II membrane protein transmembrane segment at 38–58 threads the bilayer; the sequence is LQFLYLILFVLITGVFFFFLI. The Lumenal segment spans residues 59–449; the sequence is GNFYSHRKLY…SVGFAVAKNL (391 aa). The 308-residue stretch at 137–444 folds into the Peptidase A1 domain; sequence FYGEGQIGTN…DYEKESVGFA (308 aa). The active site involves D155. Cysteines 168 and 173 form a disulfide. D335 is a catalytic residue. An intrachain disulfide couples C370 to C406.

The protein belongs to the peptidase A1 family. As to quaternary structure, component of the hemozoin formation complex (HFC) composed of falcipains FP2A and/or FP2B, plasmepsins PMII, PMIII/HAP and PMIV, heme detoxifying protein HDP and falcilysin FLN. The HFC complex is involved in hemoglobin degradation and detoxification of heme in the food vacuole during the asexual blood stage. Proteolytically cleaved into the soluble active mature form by cysteine proteases in the digestive vacuole of trophozoites. Proteolysis requires an acidic environment. Autoprocessing or transprocessing by other plasmepsins such as PMII may serve as an alternate activation system.

Its subcellular location is the membrane. It localises to the vacuole lumen. It catalyses the reaction Hydrolysis of the bonds linking certain hydrophobic residues in hemoglobin or globin. Also cleaves small molecules substrates such as Ala-Leu-Glu-Arg-Thr-Phe-|-Phe(NO2)-Ser-Phe-Pro-Thr.. With respect to regulation, inhibited by KNI derived compounds KNI-10333 and to a lesser extent KNI-10743. Its function is as follows. During the asexual blood stage, catalyzes the cleavage of denatured host hemoglobin (Hb). Digestion of host Hb is an essential step which provides the parasite with amino acids for protein synthesis, and regulates osmolarity. The chain is Plasmepsin IV from Plasmodium falciparum (isolate 3D7).